We begin with the raw amino-acid sequence, 826 residues long: Sister chromatid cohesion protein PDS5 homolog D (826 aa).

HEAT repeat units follow at residues 18–54 (GTNLLSPPSSTDDLLTLLDETESLLKNVEQDQPLSMQ), 55–94 (SALIPSRNALVSVDLLSHPDSDVRVSVVSCLTEIVRITAP), 151–188 (DLILQMFRNFFKFIRSDHPQLVFSSMELIMIAIIDETE), 189–226 (QVSTDLLDSLLATVKKENQNVSPMSWSLAEKVLSRCAR), and 230–267 (PYIIEALKSRGTSLDMYSPVVSSICQSVFNTPKVHSPV). 2 disordered regions span residues 261–551 (PKVH…EVES) and 640–826 (KKSK…KRKS). 2 stretches are compositionally biased toward basic and acidic residues: residues 269-286 (TKEHEEKLDLGHSRKENL) and 296-309 (RHETRGINEKEKVR). The Nuclear localization signal 1 motif lies at 281 to 288 (SRKENLSK). A compositionally biased stretch (polar residues) spans 311-323 (GNKSSLLKQSLKQ). The Nuclear localization signal 2 signature appears at 357 to 364 (GKRDPLKT). Polar residues predominate over residues 396-408 (SPATSSRSLTGSL). The stretch at 424-461 (SLSSPRLKKLASCFRDEEPNQEDDRKIGNSSKQTRSKN) is one HEAT 6 repeat. Residues 437 to 450 (FRDEEPNQEDDRKI) are compositionally biased toward basic and acidic residues. Residues 451-460 (GNSSKQTRSK) are compositionally biased toward polar residues. The segment covering 644–663 (NVAVSVEPTSSSGVRSSSRT) has biased composition (low complexity). Over residues 665–701 (MKKDCGKRLNKQVEKTREGKNLRSLKELNAETDRTAE) the composition is skewed to basic and acidic residues. The segment covering 702–724 (EQEVSLEAESDDRSEEQEYEDDC) has biased composition (acidic residues). Positions 725-746 (SDKKEQSQDKGVEAETKEEEKQ) are enriched in basic and acidic residues. Composition is skewed to acidic residues over residues 752-763 (GESEGEDSESEE), 771-800 (DDMEDDEEEEEEEIDHMEDEAEEEKEEVDD), and 811-826 (EKEEEEEEEDEEKRKS). Residues 770–825 (TDDMEDDEEEEEEEIDHMEDEAEEEKEEVDDKEASANMSEIEKEEEEEEEDEEKRK) are a coiled coil.

This sequence belongs to the PDS5 family. Interacts with the cohesin complex.

It localises to the nucleus. Cohesin cofactor dispensable during the meiotic division but playing an important role in DNA repair by homologous recombination (HR) probably by helping SMC5/SMC6 complex. Regulator of sister chromatid cohesion in mitosis which may stabilize cohesin complex association with chromatin. May couple sister chromatid cohesion during mitosis to DNA replication. Cohesion ensures that chromosome partitioning is accurate in both meiotic and mitotic cells and plays an important role in DNA repair. The sequence is that of Sister chromatid cohesion protein PDS5 homolog D from Arabidopsis thaliana (Mouse-ear cress).